A 227-amino-acid chain; its full sequence is Cytochrome c oxidase subunit 2 (227 aa).

Residues 1–14 lie on the Mitochondrial intermembrane side of the membrane; it reads MAYPFQLGLQDATS. A helical membrane pass occupies residues 15–45; the sequence is PIMEELTNFHDHTLMIVFLISSLVLYIISLM. Topologically, residues 46–59 are mitochondrial matrix; the sequence is LTTKLTHTSTMDAQ. Residues 60 to 87 traverse the membrane as a helical segment; that stretch reads EVETIWTILPAVILILIALPSLRILYMM. The Mitochondrial intermembrane segment spans residues 88–227; the sequence is DEINNPVLTV…YFENWSASMI (140 aa). Positions 161, 196, 198, 200, 204, and 207 each coordinate Cu cation. Residue Glu-198 participates in Mg(2+) binding. Tyr-218 is modified (phosphotyrosine).

It belongs to the cytochrome c oxidase subunit 2 family. Component of the cytochrome c oxidase (complex IV, CIV), a multisubunit enzyme composed of 14 subunits. The complex is composed of a catalytic core of 3 subunits MT-CO1, MT-CO2 and MT-CO3, encoded in the mitochondrial DNA, and 11 supernumerary subunits COX4I, COX5A, COX5B, COX6A, COX6B, COX6C, COX7A, COX7B, COX7C, COX8 and NDUFA4, which are encoded in the nuclear genome. The complex exists as a monomer or a dimer and forms supercomplexes (SCs) in the inner mitochondrial membrane with NADH-ubiquinone oxidoreductase (complex I, CI) and ubiquinol-cytochrome c oxidoreductase (cytochrome b-c1 complex, complex III, CIII), resulting in different assemblies (supercomplex SCI(1)III(2)IV(1) and megacomplex MCI(2)III(2)IV(2)). Found in a complex with TMEM177, COA6, COX18, COX20, SCO1 and SCO2. Interacts with TMEM177 in a COX20-dependent manner. Interacts with COX20. Interacts with COX16. The cofactor is Cu cation.

The protein resides in the mitochondrion inner membrane. The enzyme catalyses 4 Fe(II)-[cytochrome c] + O2 + 8 H(+)(in) = 4 Fe(III)-[cytochrome c] + 2 H2O + 4 H(+)(out). Functionally, component of the cytochrome c oxidase, the last enzyme in the mitochondrial electron transport chain which drives oxidative phosphorylation. The respiratory chain contains 3 multisubunit complexes succinate dehydrogenase (complex II, CII), ubiquinol-cytochrome c oxidoreductase (cytochrome b-c1 complex, complex III, CIII) and cytochrome c oxidase (complex IV, CIV), that cooperate to transfer electrons derived from NADH and succinate to molecular oxygen, creating an electrochemical gradient over the inner membrane that drives transmembrane transport and the ATP synthase. Cytochrome c oxidase is the component of the respiratory chain that catalyzes the reduction of oxygen to water. Electrons originating from reduced cytochrome c in the intermembrane space (IMS) are transferred via the dinuclear copper A center (CU(A)) of subunit 2 and heme A of subunit 1 to the active site in subunit 1, a binuclear center (BNC) formed by heme A3 and copper B (CU(B)). The BNC reduces molecular oxygen to 2 water molecules using 4 electrons from cytochrome c in the IMS and 4 protons from the mitochondrial matrix. The polypeptide is Cytochrome c oxidase subunit 2 (MT-CO2) (Dacnomys millardi (Millard's rat)).